A 274-amino-acid chain; its full sequence is MGSSPAPFADIGKKAKDLLNKDYIFDHKFTLTMLSATGTEFVATGLKKDDFFFGDISTLYKGQNTIVDLKIDSHSSVSTKVTLKNLLPSAKAVISFKIPDHKSGKLDVQYVHPHATLNSSIGLNPTPLLDLSATIGSQNVCLGGEVSFDTASSSLTKYNAGIGFNNQGVSAALILEDKGESLRATYVHTVNPTTSFGAELIRRFSNYNNSFTVGSSHSVDQFTVVKTRFSNSGKAGMVVQREWRPKSHITFSAEYDSKAVTSSPKLGLALALKP.

N-acetylglycine is present on G2. S76 bears the Phosphoserine mark.

It belongs to the eukaryotic mitochondrial porin (TC 1.B.8.1) family. In terms of tissue distribution, widely expressed.

It localises to the cell membrane. The protein localises to the mitochondrion outer membrane. In terms of biological role, forms a channel through the mitochondrial outer membrane that allows diffusion of small hydrophilic molecules. The channel adopts an open conformation at low or zero membrane potential and a closed conformation at potentials above 30-40 mV. The open state has a weak anion selectivity whereas the closed state is cation-selective. Involved in plant growth and development at the vegetative and reproductive stages. Is important for leaf and pollen development and mitochondrial membrane potential steady state. May be involved in disease resistance. The sequence is that of Mitochondrial outer membrane protein porin 4 (VDAC4) from Arabidopsis thaliana (Mouse-ear cress).